We begin with the raw amino-acid sequence, 86 residues long: Exodeoxyribonuclease 7 small subunit (86 aa).

Residues 1-26 (MQDELFETEKIPPKNTKNTKNAPKKS) are disordered.

Belongs to the XseB family. In terms of assembly, heterooligomer composed of large and small subunits.

Its subcellular location is the cytoplasm. It catalyses the reaction Exonucleolytic cleavage in either 5'- to 3'- or 3'- to 5'-direction to yield nucleoside 5'-phosphates.. Functionally, bidirectionally degrades single-stranded DNA into large acid-insoluble oligonucleotides, which are then degraded further into small acid-soluble oligonucleotides. The chain is Exodeoxyribonuclease 7 small subunit from Helicobacter pylori (strain ATCC 700392 / 26695) (Campylobacter pylori).